A 303-amino-acid chain; its full sequence is MKIAILSRNPSLYSTSRLKEAGEKRGHEVHVIDTLRCYMNMATHKPTIHYQGQVLEGFDAIIPRIGASITFYGTAVLRQFEMMGVFPLNESVAISRARDKLRSLQLLSRKGVGMPVTGFAHSPDDIRDLISMVGGAPLVIKLLEGTQGIGVVLAETRKAAESVIEAFMGLKANILVQEFIKEAGGADIRCFVVGDKVVAAMKRQAQPGEFRSNLHRGGQASVIKITPEERSTAVRAARVMGLNVAGVDLLRSNHGPLVMEVNSSPGLEGIETATGKDIAGLIYSFIEKKSQEKKPSTRTKGQG.

An ATP-grasp domain is found at 104-287 (LQLLSRKGVG…IAGLIYSFIE (184 aa)). Residues lysine 141, 178 to 179 (EF), aspartate 187, and 211 to 213 (RSN) contribute to the ATP site. Residues aspartate 248, glutamate 260, and asparagine 262 each contribute to the Mg(2+) site. Aspartate 248, glutamate 260, and asparagine 262 together coordinate Mn(2+).

Belongs to the RimK family. It depends on Mg(2+) as a cofactor. Mn(2+) is required as a cofactor.

This is Probable alpha-L-glutamate ligase 1 from Hahella chejuensis (strain KCTC 2396).